The chain runs to 217 residues: External core antigen (217 aa).

The signal sequence occupies residues 1–20 (MYLFHLCLVFACVPCPTVQA). The segment at 26 to 28 (GWL) is HBEAG. Residues 166-217 (APILSTLPEHTVIRRRGGSRAARSPRRRTPSPRRRRSQSPRRRRSQSPASNC) form a disordered region. Over residues 178-210 (IRRRGGSRAARSPRRRTPSPRRRRSQSPRRRRS) the composition is skewed to basic residues. A 1; half-length repeat occupies 189–195 (SPRRRTP). A 3 X 8 AA repeats of S-P-R-R-R-R-S-Q region spans residues 189–211 (SPRRRTPSPRRRRSQSPRRRRSQ). Residues 189-217 (SPRRRTPSPRRRRSQSPRRRRSQSPASNC) constitute a propeptide that is removed on maturation. Tandem repeats lie at residues 196 to 203 (SPRRRRSQ) and 204 to 211 (SPRRRRSQ).

This sequence belongs to the orthohepadnavirus precore antigen family. In terms of assembly, homodimerizes. Post-translationally, phosphorylated. Cleaved by host furin.

The protein resides in the secreted. Its subcellular location is the host nucleus. In terms of biological role, may regulate immune response to the intracellular capsid in acting as a T-cell tolerogen, by having an immunoregulatory effect which prevents destruction of infected cells by cytotoxic T-cells. This immune regulation may predispose to chronicity during perinatal infections and prevent severe liver injury during adult infections. This is External core antigen from Otospermophilus beecheyi (California ground squirrel).